Reading from the N-terminus, the 150-residue chain is Urease accessory protein UreE (150 aa).

The protein belongs to the UreE family.

It is found in the cytoplasm. In terms of biological role, involved in urease metallocenter assembly. Binds nickel. Probably functions as a nickel donor during metallocenter assembly. The polypeptide is Urease accessory protein UreE (Streptococcus vestibularis).